A 373-amino-acid polypeptide reads, in one-letter code: Chorismate synthase (373 aa).

Residue R46 coordinates NADP(+). Residues 123-125, 251-252, G295, 310-314, and R337 each bind FMN; these read RSS, NA, and KPTPS.

This sequence belongs to the chorismate synthase family. It depends on FMNH2 as a cofactor.

The catalysed reaction is 5-O-(1-carboxyvinyl)-3-phosphoshikimate = chorismate + phosphate. Its pathway is metabolic intermediate biosynthesis; chorismate biosynthesis; chorismate from D-erythrose 4-phosphate and phosphoenolpyruvate: step 7/7. Its function is as follows. Catalyzes the anti-1,4-elimination of the C-3 phosphate and the C-6 proR hydrogen from 5-enolpyruvylshikimate-3-phosphate (EPSP) to yield chorismate, which is the branch point compound that serves as the starting substrate for the three terminal pathways of aromatic amino acid biosynthesis. This reaction introduces a second double bond into the aromatic ring system. This is Chorismate synthase from Methanococcus maripaludis (strain C7 / ATCC BAA-1331).